The chain runs to 528 residues: FAD-dependent monooxygenase DEP2 (528 aa).

Residues 1–23 form the signal peptide; that stretch reads MEDGRSTFKVIIIGAGVTGLTLA. 4 residues coordinate FAD: D37, R110, D311, and G324. A helical membrane pass occupies residues 479–499; the sequence is VFPQILGVLMVMWSSVWLFHL. N521 carries an N-linked (GlcNAc...) asparagine glycan.

Belongs to the paxM FAD-dependent monooxygenase family. The cofactor is FAD.

Its subcellular location is the membrane. Its pathway is polyketide biosynthesis. FAD-dependent monooxygenase; part of the gene cluster that mediates the biosynthesis of depudecin, a highly oxidized eleven-carbon linear polyketide that acts as a histone deacetylase (HDAC) inhibitor and makes a small contribution to pathogenesis. The reducing polyketide synthase DEP5 is the central enzyme in depudecin biosynthesis by yielding the backbone polyketide chain. The monooxygenases DEP2 and DEP4, as well as the uncharacterized protein DEP1, then act as tailoring enzymes to modify the intermediate polyketide chain into depudecin. This is FAD-dependent monooxygenase DEP2 from Alternaria brassicicola (Dark leaf spot agent).